The chain runs to 161 residues: 6,7-dimethyl-8-ribityllumazine synthase (161 aa).

5-amino-6-(D-ribitylamino)uracil-binding positions include phenylalanine 23, 61-63, and 85-87; these read SFE and AVI. 90-91 lines the (2S)-2-hydroxy-3-oxobutyl phosphate pocket; it reads DT. Histidine 93 (proton donor) is an active-site residue. Phenylalanine 118 provides a ligand contact to 5-amino-6-(D-ribitylamino)uracil. Arginine 132 serves as a coordination point for (2S)-2-hydroxy-3-oxobutyl phosphate.

The protein belongs to the DMRL synthase family.

The enzyme catalyses (2S)-2-hydroxy-3-oxobutyl phosphate + 5-amino-6-(D-ribitylamino)uracil = 6,7-dimethyl-8-(1-D-ribityl)lumazine + phosphate + 2 H2O + H(+). Its pathway is cofactor biosynthesis; riboflavin biosynthesis; riboflavin from 2-hydroxy-3-oxobutyl phosphate and 5-amino-6-(D-ribitylamino)uracil: step 1/2. Catalyzes the formation of 6,7-dimethyl-8-ribityllumazine by condensation of 5-amino-6-(D-ribitylamino)uracil with 3,4-dihydroxy-2-butanone 4-phosphate. This is the penultimate step in the biosynthesis of riboflavin. This is 6,7-dimethyl-8-ribityllumazine synthase from Synechococcus sp. (strain WH7803).